A 314-amino-acid polypeptide reads, in one-letter code: MPLRLIFMGTPDFAVPTLQQLVAHGHEIAAVYTREARPAGRGMKLQPTPVAREAQRLGLPVLTPKTLKTQESQDQLRSYGADAAVVVAYGLILPQAILDAPRYGCYNLHASLLPRWRGAAPINRAVMAGDAESGVMVMKIDAGLDTGDVAMAERVPITDAMTASDLHDTLAPLGADLMARAMDALERGELRLTKQSEQGVASTVTYAAKIDKAEAHIVWSNPAREVLRHIHGLSPFPGAWCEMPVDGEAVRIKILRCELAEGAGSPGDLLDDRLTIACKDGAIRVLELQRAGKPPMKAAAFLNGTPLTPPLRLD.

111-114 (SLLP) contributes to the (6S)-5,6,7,8-tetrahydrofolate binding site.

It belongs to the Fmt family.

The catalysed reaction is L-methionyl-tRNA(fMet) + (6R)-10-formyltetrahydrofolate = N-formyl-L-methionyl-tRNA(fMet) + (6S)-5,6,7,8-tetrahydrofolate + H(+). Attaches a formyl group to the free amino group of methionyl-tRNA(fMet). The formyl group appears to play a dual role in the initiator identity of N-formylmethionyl-tRNA by promoting its recognition by IF2 and preventing the misappropriation of this tRNA by the elongation apparatus. The sequence is that of Methionyl-tRNA formyltransferase from Nitrobacter winogradskyi (strain ATCC 25391 / DSM 10237 / CIP 104748 / NCIMB 11846 / Nb-255).